Reading from the N-terminus, the 69-residue chain is DNA-directed RNA polymerase subunit omega (69 aa).

Belongs to the RNA polymerase subunit omega family. The RNAP catalytic core consists of 2 alpha, 1 beta, 1 beta' and 1 omega subunit. When a sigma factor is associated with the core the holoenzyme is formed, which can initiate transcription.

The catalysed reaction is RNA(n) + a ribonucleoside 5'-triphosphate = RNA(n+1) + diphosphate. Its function is as follows. Promotes RNA polymerase assembly. Latches the N- and C-terminal regions of the beta' subunit thereby facilitating its interaction with the beta and alpha subunits. The sequence is that of DNA-directed RNA polymerase subunit omega from Carboxydothermus hydrogenoformans (strain ATCC BAA-161 / DSM 6008 / Z-2901).